The sequence spans 254 residues: Undecaprenyl-diphosphatase (254 aa).

A run of 8 helical transmembrane segments spans residues 1–21 (MGIIESIILGIVEGLTEFLPV), 41–61 (AHKAFEVAIQSGAILAVVFLY), 75–95 (LIIAFIPTGILGFLLYKIIKG), 96–116 (LFSPYIVSIMLIVGGLVFIAV), 130–150 (ILKIPYYKAFFIGVFQSIAMI), 174–194 (AEFSFLLAVPTMFAATSYDIM), 210–230 (TGFVTAFVFAVLAIKLFIGFV), and 234–254 (NFVPFGIYRIILGFIFLLFVL).

Belongs to the UppP family.

Its subcellular location is the cell inner membrane. The catalysed reaction is di-trans,octa-cis-undecaprenyl diphosphate + H2O = di-trans,octa-cis-undecaprenyl phosphate + phosphate + H(+). In terms of biological role, catalyzes the dephosphorylation of undecaprenyl diphosphate (UPP). Confers resistance to bacitracin. The polypeptide is Undecaprenyl-diphosphatase (Persephonella marina (strain DSM 14350 / EX-H1)).